We begin with the raw amino-acid sequence, 242 residues long: MNNNINFIKCSSYEELSKKTANDFITVIKNKPNSVLGLATGSSPMGVYKELIKAYENKEISFRDCVSFNLDEYIGLKKEYEDQTYKYFMNDNLFSKIDINKDNTFFPIDAFSTNMNQDFESYDSKIDSYNGLDILILGIGNNGHIGFNEPGSLIDSKTRMIDLTESTIKANSRFFKSENDVPRKSVTMGLSTILKAKKIVLVVVGDSKKEALNALMNSKSFDSNWPCTALVNHDNVVVYYIG.

Asp-71 (proton acceptor; for enolization step) is an active-site residue. The active-site For ring-opening step is Asn-142. The active-site Proton acceptor; for ring-opening step is the His-144. Glu-149 functions as the For ring-opening step in the catalytic mechanism.

Belongs to the glucosamine/galactosamine-6-phosphate isomerase family. NagB subfamily.

The catalysed reaction is alpha-D-glucosamine 6-phosphate + H2O = beta-D-fructose 6-phosphate + NH4(+). The protein operates within amino-sugar metabolism; N-acetylneuraminate degradation; D-fructose 6-phosphate from N-acetylneuraminate: step 5/5. Its function is as follows. Catalyzes the reversible isomerization-deamination of glucosamine 6-phosphate (GlcN6P) to form fructose 6-phosphate (Fru6P) and ammonium ion. This is Glucosamine-6-phosphate deaminase from Malacoplasma penetrans (strain HF-2) (Mycoplasma penetrans).